Here is a 52-residue protein sequence, read N- to C-terminus: Rubredoxin-2 (52 aa).

One can recognise a Rubredoxin-like domain in the interval 1–52; the sequence is MEQWKCNICGYIYNPETGDPEGDIPAGTSFESLPDSWMCPVCGAGKEEFTKI. Residues C6, C9, C39, and C42 each coordinate Fe cation.

It belongs to the rubredoxin family. In terms of assembly, monomer. Fe(3+) is required as a cofactor.

In terms of biological role, serves as an electron acceptor for pyruvate ferredoxin oxidoreductase (PFOR). The protein is Rubredoxin-2 (rub2) of Chlorobaculum tepidum (strain ATCC 49652 / DSM 12025 / NBRC 103806 / TLS) (Chlorobium tepidum).